The chain runs to 78 residues: Large ribosomal subunit protein bL28 (78 aa).

Belongs to the bacterial ribosomal protein bL28 family.

The sequence is that of Large ribosomal subunit protein bL28 from Bordetella avium (strain 197N).